The chain runs to 299 residues: Putative fructokinase (299 aa).

Thr130 serves as a coordination point for ATP. Zn(2+) contacts are provided by His153, Cys168, His171, and Cys174. Residues Pro182 and 230–234 (GVMQQ) contribute to the ATP site.

The protein belongs to the ROK (NagC/XylR) family. The cofactor is Mg(2+).

It catalyses the reaction D-fructose + ATP = D-fructose 6-phosphate + ADP + H(+). With respect to regulation, inhibited by zinc ions. In terms of biological role, seems to be involved in the degradation of glucomannan. The protein is Putative fructokinase (gmuE) of Bacillus subtilis (strain 168).